The primary structure comprises 312 residues: tRNA uridine(34) hydroxylase (312 aa).

One can recognise a Rhodanese domain in the interval 145 to 235 (ENKNSVLVDM…GIIKYVRDAR (91 aa)). The active-site Cysteine persulfide intermediate is Cys-199.

Belongs to the TrhO family.

The enzyme catalyses uridine(34) in tRNA + AH2 + O2 = 5-hydroxyuridine(34) in tRNA + A + H2O. Functionally, catalyzes oxygen-dependent 5-hydroxyuridine (ho5U) modification at position 34 in tRNAs. This chain is tRNA uridine(34) hydroxylase, found in Buchnera aphidicola subsp. Baizongia pistaciae (strain Bp).